The chain runs to 608 residues: UvrABC system protein C (608 aa).

A GIY-YIG domain is found at 18 to 96; the sequence is NQPGVYRMYN…IKKYKPRYNV (79 aa). Residues 206-241 enclose the UVR domain; sequence KQVIDSLVQHMERASTDLRFEAAARYRDQISALNKV.

It belongs to the UvrC family. As to quaternary structure, interacts with UvrB in an incision complex.

The protein localises to the cytoplasm. Functionally, the UvrABC repair system catalyzes the recognition and processing of DNA lesions. UvrC both incises the 5' and 3' sides of the lesion. The N-terminal half is responsible for the 3' incision and the C-terminal half is responsible for the 5' incision. This chain is UvrABC system protein C, found in Pseudoalteromonas atlantica (strain T6c / ATCC BAA-1087).